The sequence spans 469 residues: 3-isopropylmalate dehydratase large subunit (469 aa).

3 residues coordinate [4Fe-4S] cluster: C350, C410, and C413.

This sequence belongs to the aconitase/IPM isomerase family. LeuC type 1 subfamily. As to quaternary structure, heterodimer of LeuC and LeuD. [4Fe-4S] cluster serves as cofactor.

It catalyses the reaction (2R,3S)-3-isopropylmalate = (2S)-2-isopropylmalate. The protein operates within amino-acid biosynthesis; L-leucine biosynthesis; L-leucine from 3-methyl-2-oxobutanoate: step 2/4. In terms of biological role, catalyzes the isomerization between 2-isopropylmalate and 3-isopropylmalate, via the formation of 2-isopropylmaleate. This Rhizobium etli (strain ATCC 51251 / DSM 11541 / JCM 21823 / NBRC 15573 / CFN 42) protein is 3-isopropylmalate dehydratase large subunit.